We begin with the raw amino-acid sequence, 381 residues long: Alkanesulfonate monooxygenase (381 aa).

Belongs to the SsuD family. As to quaternary structure, homotetramer.

It carries out the reaction an alkanesulfonate + FMNH2 + O2 = an aldehyde + FMN + sulfite + H2O + 2 H(+). In terms of biological role, catalyzes the desulfonation of aliphatic sulfonates. This is Alkanesulfonate monooxygenase from Enterobacter sp. (strain 638).